Reading from the N-terminus, the 1171-residue chain is Kinesin-like protein GA13060 (1171 aa).

The disordered stretch occupies residues 1–24 (MASSISRNGGFCGALQRAPPPMPP). Residues 40–400 (KVKVMLRVSD…IQIASRIHRL (361 aa)) enclose the Kinesin motor domain. Disordered regions lie at residues 737-774 (LLGQDMSLPPDGDEDQDSGPSEVPPALPLFDDPLGSRD), 798-820 (LVASRASSSHHQHQHHRPSSQRS), 932-955 (PAYRLTPSPPKQPSHSPSQGSLPS), 1043-1099 (TSSE…QRHR), and 1124-1143 (RHSHGVGGHKKHRHRHEGNG). The segment covering 805 to 816 (SSHHQHQHHRPS) has biased composition (basic residues). Residues 1043–1059 (TSSEAYDSGHDSNSTPR) show a composition bias toward polar residues. The segment covering 1124–1139 (RHSHGVGGHKKHRHRH) has biased composition (basic residues).

The protein belongs to the TRAFAC class myosin-kinesin ATPase superfamily. Kinesin family. KIF26 subfamily.

It is found in the cytoplasm. Its subcellular location is the cytoskeleton. This chain is Kinesin-like protein GA13060, found in Drosophila pseudoobscura pseudoobscura (Fruit fly).